Reading from the N-terminus, the 1215-residue chain is DNA-directed RNA polymerase subunit beta' (1215 aa).

4 residues coordinate Zn(2+): C60, C62, C75, and C78. Mg(2+) is bound by residues D450, D452, and D454. C818, C892, C899, and C902 together coordinate Zn(2+).

The protein belongs to the RNA polymerase beta' chain family. In terms of assembly, the RNAP catalytic core consists of 2 alpha, 1 beta, 1 beta' and 1 omega subunit. When a sigma factor is associated with the core the holoenzyme is formed, which can initiate transcription. The cofactor is Mg(2+). Zn(2+) is required as a cofactor.

The catalysed reaction is RNA(n) + a ribonucleoside 5'-triphosphate = RNA(n+1) + diphosphate. DNA-dependent RNA polymerase catalyzes the transcription of DNA into RNA using the four ribonucleoside triphosphates as substrates. The sequence is that of DNA-directed RNA polymerase subunit beta' from Streptococcus suis (strain 98HAH33).